We begin with the raw amino-acid sequence, 64 residues long: Small ribosomal subunit protein bS21 (64 aa).

Residues P40–F64 are disordered. The segment covering R55–F64 has biased composition (basic residues).

The protein belongs to the bacterial ribosomal protein bS21 family.

In Elusimicrobium minutum (strain Pei191), this protein is Small ribosomal subunit protein bS21.